The chain runs to 480 residues: Cysteine--tRNA ligase (480 aa).

Zn(2+) is bound at residue cysteine 29. A 'HIGH' region motif is present at residues 31–41; the sequence is ITVYDYCHLGH. Residues cysteine 215, histidine 240, and glutamate 244 each contribute to the Zn(2+) site. The 'KMSKS' region signature appears at 272 to 276; it reads KMSKS. Lysine 275 is a binding site for ATP.

The protein belongs to the class-I aminoacyl-tRNA synthetase family. As to quaternary structure, monomer. Requires Zn(2+) as cofactor.

It is found in the cytoplasm. It catalyses the reaction tRNA(Cys) + L-cysteine + ATP = L-cysteinyl-tRNA(Cys) + AMP + diphosphate. In Microcystis aeruginosa (strain NIES-843 / IAM M-2473), this protein is Cysteine--tRNA ligase.